We begin with the raw amino-acid sequence, 419 residues long: Akuammiline synthase 1 (419 aa).

The active-site Proton acceptor is the histidine 151. A Nuclear localization signal motif is present at residues 206–213 (TRRFVFPA). The active-site Proton acceptor is aspartate 359.

It belongs to the plant acyltransferase family. As to quaternary structure, monomer.

The protein localises to the cytoplasm. Its subcellular location is the nucleus. The enzyme catalyses rhazimol + acetyl-CoA = akuammiline + CoA + H(+). The protein operates within alkaloid biosynthesis. Functionally, acyltransferase involved in the biosynthesis of akuammilan monoterpene indole alkaloids (MIAs) natural products, components with various biological properties such as antidiabetic, antibacterial, anti-inflammatory, anticancer, and antimalarial activities. Catalyzes the conversion of rhazimol to akuammiline. In Alstonia scholaris (Dogbane), this protein is Akuammiline synthase 1.